A 171-amino-acid polypeptide reads, in one-letter code: Large ribosomal subunit protein bL9 (171 aa).

It belongs to the bacterial ribosomal protein bL9 family.

In terms of biological role, binds to the 23S rRNA. This is Large ribosomal subunit protein bL9 from Rickettsia akari (strain Hartford).